Reading from the N-terminus, the 326-residue chain is Ribosomal large subunit pseudouridine synthase D (326 aa).

The 74-residue stretch at Q18–E91 folds into the S4 RNA-binding domain. Residue D139 is part of the active site.

It belongs to the pseudouridine synthase RluA family.

It localises to the cytoplasm. It catalyses the reaction uridine(1911/1915/1917) in 23S rRNA = pseudouridine(1911/1915/1917) in 23S rRNA. In terms of biological role, responsible for synthesis of pseudouridine from uracil at positions 1911, 1915 and 1917 in 23S ribosomal RNA. The chain is Ribosomal large subunit pseudouridine synthase D (rluD) from Shigella flexneri.